A 154-amino-acid polypeptide reads, in one-letter code: Large ribosomal subunit protein uL15 (154 aa).

A disordered region spans residues 1–61; sequence MDLSTLKPVA…GGQMPLMRRM (61 aa).

This sequence belongs to the universal ribosomal protein uL15 family. Part of the 50S ribosomal subunit.

In terms of biological role, binds to the 23S rRNA. This Oenococcus oeni (strain ATCC BAA-331 / PSU-1) protein is Large ribosomal subunit protein uL15.